The sequence spans 1339 residues: DNA polymerase alpha catalytic subunit (1339 aa).

Disordered regions lie at residues 1–29 (MEDWVSCRSEEQKRCEEKGQSTFDESEEE) and 60–89 (AKRRKPRKSGKVIATQKCAQPQNQHRHQQK). The segment covering 8–19 (RSEEQKRCEEKG) has biased composition (basic and acidic residues). Zn(2+) is bound by residues Cys1179, Cys1182, Cys1215, Cys1218, Cys1235, Cys1244, Cys1274, and Cys1289. The segment at 1179 to 1218 (CTHCQLVVPVDPHKYINDMFSSREKPPPTAPFELYVCFNC) adopts a CysA-type zinc-finger fold. The short motif at 1244–1274 (CSGGNVASVRALRAQFTYLRAMFDVPQALNC) is the CysB motif element.

This sequence belongs to the DNA polymerase type-B family.

It is found in the nucleus. It carries out the reaction DNA(n) + a 2'-deoxyribonucleoside 5'-triphosphate = DNA(n+1) + diphosphate. Functionally, polymerase alpha in a complex with DNA primase is a replicative polymerase. The polypeptide is DNA polymerase alpha catalytic subunit (Trypanosoma brucei brucei).